The following is a 662-amino-acid chain: Acetyl-coenzyme A synthetase (662 aa).

Residues Arg-197–Lys-200 and Thr-317 contribute to the CoA site. Residues Gly-393–Pro-395, Asp-417–Thr-422, Asp-510, and Arg-525 each bind ATP. Ser-533 provides a ligand contact to CoA. Arg-536 is a binding site for ATP. His-549 and Val-552 together coordinate Mg(2+). Lys-623 carries the post-translational modification N6-acetyllysine.

The protein belongs to the ATP-dependent AMP-binding enzyme family. Requires Mg(2+) as cofactor. Post-translationally, acetylated. Deacetylation by the SIR2-homolog deacetylase activates the enzyme.

It catalyses the reaction acetate + ATP + CoA = acetyl-CoA + AMP + diphosphate. In terms of biological role, catalyzes the conversion of acetate into acetyl-CoA (AcCoA), an essential intermediate at the junction of anabolic and catabolic pathways. AcsA undergoes a two-step reaction. In the first half reaction, AcsA combines acetate with ATP to form acetyl-adenylate (AcAMP) intermediate. In the second half reaction, it can then transfer the acetyl group from AcAMP to the sulfhydryl group of CoA, forming the product AcCoA. The chain is Acetyl-coenzyme A synthetase from Helicobacter acinonychis (strain Sheeba).